The sequence spans 76 residues: Conotoxin Cl6.4 (76 aa).

Positions 1-19 are cleaved as a signal peptide; sequence MTLTFLLVVALCMLTTCHT. Positions 20–47 are excised as a propeptide; the sequence is ENYRDSQKVSPVRSIGKTQFARSLRLSE. 3 cysteine pairs are disulfide-bonded: cysteine 50/cysteine 66, cysteine 57/cysteine 70, and cysteine 65/cysteine 75.

In terms of tissue distribution, expressed by the venom duct.

Its subcellular location is the secreted. This is Conotoxin Cl6.4 from Californiconus californicus (California cone).